We begin with the raw amino-acid sequence, 174 residues long: Soma ferritin (174 aa).

The Ferritin-like diiron domain maps to 8–157 (QNYHAESEAG…DYITNLKRVG (150 aa)). The Fe cation site is built by E25, E60, H63, E105, and Q139.

The protein belongs to the ferritin family. As to quaternary structure, oligomer of 12 or 24 subunits. The functional molecule is roughly spherical and contains a central cavity into which the polymeric mineral iron core is deposited. Expressed in somatic tissues but not in oocytes.

It localises to the cytoplasm. It carries out the reaction 4 Fe(2+) + O2 + 4 H(+) = 4 Fe(3+) + 2 H2O. Functionally, stores iron in a soluble, non-toxic, readily available form. Important for iron homeostasis. Has ferroxidase activity. Iron is taken up in the ferrous form and deposited as ferric hydroxides after oxidation. This chain is Soma ferritin, found in Lymnaea stagnalis (Great pond snail).